The sequence spans 285 residues: Nucleotide-binding protein Pfl01_0854 (285 aa).

An ATP-binding site is contributed by 8–15 (GRSGSGKS). 60 to 63 (DARN) is a binding site for GTP.

This sequence belongs to the RapZ-like family.

Its function is as follows. Displays ATPase and GTPase activities. The protein is Nucleotide-binding protein Pfl01_0854 of Pseudomonas fluorescens (strain Pf0-1).